The following is a 1849-amino-acid chain: NADH-ubiquinone oxidoreductase chain 5 (1849 aa).

41 helical membrane-spanning segments follow: residues 76–93, 98–120, 190–212, 222–244, 279–301, 316–338, 358–380, 390–412, 419–441, 483–505, 510–532, 536–558, 565–587, 621–640, 683–705, 718–740, 745–767, 797–819, 868–890, 905–927, 966–988, 1008–1030, 1073–1095, 1105–1127, 1172–1194, 1219–1241, 1248–1270, 1296–1318, 1330–1352, 1357–1379, 1418–1440, 1444–1466, 1478–1500, 1504–1526, 1533–1555, 1559–1581, 1602–1624, 1639–1661, 1719–1741, 1773–1795, and 1802–1824; these read YLLL…TVCY, LILL…YLQY, YWLC…IIGW, LVPT…IYLY, HLLT…ILSS, LALQ…ILCY, LEII…ILSV, VIIL…TILI, IAVY…IWLL, LLDA…CLGV, LFIA…LQVV, ISYI…VYSI, LIMY…IHTI, IWLI…STLV, WVRF…YVQF, LTRI…QGIL, IISY…LTIL, PTWV…LVTV, ILLL…LLSL, LTVQ…YIVL, LYSY…SLLE, PDLL…ELLL, LTVV…QILF, LATI…LSYL, TYLL…IYII, VYFL…FFYH, GIFY…TLYY, IITF…AIIL, FAYN…IVSY, MIIF…YARI, LFAL…FDFT, VIVF…FVWL, ALIH…APIL, VYTL…ILAT, KAVA…FLAF, LIYL…YIVH, IAIY…GFFA, VATF…LYRI, LLHL…LVTG, VRNI…TAIN, and IIYL…HYFL.

It belongs to the complex I subunit 5 family.

The protein localises to the hydrogenosome membrane. The enzyme catalyses a ubiquinone + NADH + 5 H(+)(in) = a ubiquinol + NAD(+) + 4 H(+)(out). The protein is NADH-ubiquinone oxidoreductase chain 5 (nad5) of Nyctotherus ovalis.